A 661-amino-acid polypeptide reads, in one-letter code: Kininogen-1 (661 aa).

The first 20 residues, 1 to 20 (MKLITTLLLCSGLLLTLTQG), serve as a signal peptide directing secretion. The Cystatin kininogen-type 1 domain maps to 28–131 (CNDEAVFQAV…TQTCKIAPSK (104 aa)). 9 disulfide bridges follow: Cys28–Cys631, Cys83–Cys94, Cys107–Cys125, Cys141–Cys144, Cys205–Cys217, Cys228–Cys247, Cys263–Cys266, Cys327–Cys339, and Cys350–Cys369. Asn82 carries N-linked (GlcNAc...) asparagine glycosylation. Positions 150 to 253 (TDSPDLEPVL…SQSCTLYSGD (104 aa)) constitute a Cystatin kininogen-type 2 domain. Residues Asn168 and Asn204 are each glycosylated (N-linked (GlcNAc...) asparagine). Asn242 carries N-linked (GlcNAc...) asparagine glycosylation. Residues 272–375 (VDSPELKEVL…TVKCQALDMT (104 aa)) enclose the Cystatin kininogen-type 3 domain. The residue at position 331 (Ser331) is a Phosphoserine. Disordered stretches follow at residues 405-471 (YIAR…LGHG), 485-583 (DGDD…FQDS), and 626-661 (ATSPKCPGRPWKPASWEDPNTETTEFSDFDLLDALS). Composition is skewed to basic residues over residues 434 to 471 (KANKNHRGHKHGHDHGHWSPRRHGLGHGHQKPHGLGHG) and 492 to 526 (TVGHGHGHGHGHGHGHGHGHGHGHGHGHGHGHGKH). Residues 541-555 (TESLASSSEYSTTST) show a composition bias toward low complexity. Positions 650–661 (EFSDFDLLDALS) are enriched in acidic residues.

Isoform LMW interacts with CRISP3. Post-translationally, bradykinin is released from kininogen by plasma kallikrein. In terms of processing, phosphorylated by FAM20C in the extracellular medium. Bradykinin is inactivated by ACE, which removes the dipeptide Arg-Phe from its C-terminus. In terms of tissue distribution, plasma.

Its subcellular location is the secreted. The protein resides in the extracellular space. Kininogens are inhibitors of thiol proteases. HMW-kininogen plays an important role in blood coagulation by helping to position optimally prekallikrein and factor XI next to factor XII; HMW-kininogen inhibits the thrombin- and plasmin-induced aggregation of thrombocytes. LMW-kininogen inhibits the aggregation of thrombocytes. LMW-kininogen is in contrast to HMW-kininogen not involved in blood clotting. In terms of biological role, the active peptide bradykinin is a potent vasodilatator that is released from HMW-kininogen shows a variety of physiological effects: (A) influence in smooth muscle contraction, (B) induction of hypotension, (C) natriuresis and diuresis, (D) decrease in blood glucose level, (E) it is a mediator of inflammation and causes (E1) increase in vascular permeability, (E2) stimulation of nociceptors (4E3) release of other mediators of inflammation (e.g. prostaglandins), (F) it has a cardioprotective effect (directly via bradykinin action, indirectly via endothelium-derived relaxing factor action). In Mus musculus (Mouse), this protein is Kininogen-1 (Kng1).